The chain runs to 743 residues: Cytosolic neutral trehalase (743 aa).

The Ca(2+) site is built by Asp95, Asp97, Asn99, Gln101, and Asp106. Residues Arg285, 292–293 (WD), Asn329, 338–340 (RSQ), Glu405, Arg454, and Gly457 contribute to the substrate site. Active-site proton donor/acceptor residues include Asp459 and Glu664.

Belongs to the glycosyl hydrolase 37 family. Requires Ca(2+) as cofactor.

Its subcellular location is the cytoplasm. It carries out the reaction alpha,alpha-trehalose + H2O = alpha-D-glucose + beta-D-glucose. It functions in the pathway carbohydrate degradation. Hydrolyzes intracellular trehalose to glucose. The chain is Cytosolic neutral trehalase from Beauveria bassiana (strain ARSEF 2860) (White muscardine disease fungus).